The sequence spans 222 residues: uncharacterized protein (222 aa).

The segment at residues 1 to 27 (MSFTRRKFVLGMGTVIFFTGSASSLLA) is a signal peptide (tat-type signal). 3 4Fe-4S ferredoxin-type domains span residues 37-66 (YAMIHDESRCNGCNICARACRKTNHAPAQG), 83-114 (TQYHFFRQSCQHCEDAPCIDVCPTGASWRDEQ), and 115-144 (GIVRVEKSQCIGCSYCIGACPYQVRYLNPV). Positions 46, 49, 52, 56, 92, 95, 100, 104, 124, 127, 130, 134, 151, 154, 167, and 171 each coordinate [4Fe-4S] cluster.

Post-translationally, predicted to be exported by the Tat system. The position of the signal peptide cleavage has not been experimentally proven.

This is an uncharacterized protein from Escherichia coli O157:H7.